Reading from the N-terminus, the 328-residue chain is Homoarginine-6-hydroxylase 2-ODD-233 (328 aa).

Residues 183–288 form the Fe2OG dioxygenase domain; sequence FWVCRLIGYP…VSVAFFYESN (106 aa). Residues His210, Asp212, and His268 each contribute to the Fe cation site. Residue Arg278 participates in 2-oxoglutarate binding.

The protein belongs to the iron/ascorbate-dependent oxidoreductase family. The cofactor is Fe(2+). L-ascorbate serves as cofactor. In terms of tissue distribution, expressed in roots and shoots.

Its subcellular location is the cytoplasm. It catalyses the reaction L-homoarginine + 2-oxoglutarate + O2 = 6-hydroxy-L-homoarginine + succinate + CO2. The catalysed reaction is melatonin + 2-oxoglutarate + O2 = 2-hydroxymelatonin + succinate + CO2. 2-oxoglutarate-dependent dioxygenase catalyzing homoarginine 6-hydroxylation thus producing 6-hydroxy-L-homoarginine. Guanidine (Gd) is in turn synthesized by the spontaneous conversion of 6-hydroxy-L-homoarginine to (S)-2-amino-6-oxohexanoate (RHEA:79843); guanidine is a nitrogen-rich compound that can serve as a defense or signaling substance. Involved in melatonin degradation. Catalyzes the hydroxylation of melatonin to produce 2-hydroxymelatonin. In Oryza sativa subsp. japonica (Rice), this protein is Homoarginine-6-hydroxylase 2-ODD-233.